The following is a 361-amino-acid chain: RNA 3'-terminal phosphate cyclase (361 aa).

The ATP site is built by Q105, P132, Y295, D298, Q299, and H321. The active-site Tele-AMP-histidine intermediate is H321.

It belongs to the RNA 3'-terminal cyclase family. Type 1 subfamily.

It localises to the nucleus. Its subcellular location is the nucleoplasm. The enzyme catalyses a 3'-end 3'-phospho-ribonucleotide-RNA + ATP = a 3'-end 2',3'-cyclophospho-ribonucleotide-RNA + AMP + diphosphate. In terms of biological role, catalyzes the conversion of 3'-phosphate to a 2',3'-cyclic phosphodiester at the end of RNA. The mechanism of action of the enzyme occurs in 3 steps: (A) adenylation of the enzyme by ATP; (B) transfer of adenylate to an RNA-N3'P to produce RNA-N3'PP5'A; (C) and attack of the adjacent 2'-hydroxyl on the 3'-phosphorus in the diester linkage to produce the cyclic end product. Likely functions in some aspects of cellular RNA processing. Function plays an important role in a RNA repair and splicing pathway which controls axon regeneration in response to peripheral (PNS) and central nervous system (CNS) injury. In response to axotomy, negatively regulates splicing of Xbp1 which in turn activates downstream effectors which inhibit axon regeneration, including down-regulating the microtubule regulators ringer and futsch. The chain is RNA 3'-terminal phosphate cyclase from Drosophila melanogaster (Fruit fly).